Reading from the N-terminus, the 213-residue chain is Glutathione S-transferase (213 aa).

In terms of domain architecture, GST N-terminal spans 4-81 (AKPILYGAWI…YLEDKYPQHP (78 aa)). A GST C-terminal domain is found at 86-211 (DIKTKGLDLQ…LPQNQPDAPS (126 aa)).

Belongs to the GST superfamily. Zeta family.

It localises to the cytoplasm. It carries out the reaction RX + glutathione = an S-substituted glutathione + a halide anion + H(+). In terms of biological role, has a glutathione transferase activity with ethacrynic acid and nitrophenyl acetate. Has low glutathione peroxidase activity with cumene hydroperoxide. This is Glutathione S-transferase (GSTZ1) from Triticum aestivum (Wheat).